Consider the following 226-residue polypeptide: PKHD-type hydroxylase mma_3620 (226 aa).

The Fe2OG dioxygenase domain occupies 78-178 (RYMPPLFNRY…RVCSFFWLQS (101 aa)). Residues His96, Asp98, and His159 each contribute to the Fe cation site. Arg169 is a binding site for 2-oxoglutarate.

The cofactor is Fe(2+). L-ascorbate is required as a cofactor.

The chain is PKHD-type hydroxylase mma_3620 from Janthinobacterium sp. (strain Marseille) (Minibacterium massiliensis).